The chain runs to 233 residues: Modulator of macroautophagy TMEM150B (233 aa).

The Cytoplasmic portion of the chain corresponds to 1–7 (MWGYLSL). Residues 8–28 (MPVFLAVWAISGVWIVFAIAV) form a helical membrane-spanning segment. The Extracellular portion of the chain corresponds to 29–51 (TNRTVDLSKGFPYISICGSFPPQ). N-linked (GlcNAc...) asparagine glycosylation occurs at N30. A helical membrane pass occupies residues 52–72 (SCIFSQVLNMGAALAAWICIV). Topologically, residues 73 to 84 (RYHQLRDWGVRR) are cytoplasmic. Residues 85 to 105 (WPNQLILWTGLLCALGTSVVG) traverse the membrane as a helical segment. At 106 to 116 (NFQEKNQRPTH) the chain is on the extracellular side. A helical transmembrane segment spans residues 117-137 (LAGAFLAFILGNVYFWLQLLL). Residues 138 to 155 (WRLKRLPQPGAAWIGPLR) lie on the Cytoplasmic side of the membrane. A helical transmembrane segment spans residues 156-176 (LGLCSVCTILIVAMIVLHACS). The Extracellular segment spans residues 177 to 185 (LRSVSAACE). Residues 186-206 (WVVAMLLFALFGLLAVDFSAL) traverse the membrane as a helical segment. Topologically, residues 207–233 (ESCTLCVQPWPSLSPPPASPISLPVQL) are cytoplasmic.

It belongs to the DRAM/TMEM150 family. As to expression, highly expressed in the colon and lung with comparatively high levels also detectable in the lymph nodes, placenta, duodenum, peripheral blood mononuclear cells and spleen.

The protein resides in the cell membrane. Its subcellular location is the endosome membrane. It is found in the cytoplasmic vesicle. It localises to the autophagosome membrane. In terms of biological role, modulator of macroautophagy that causes accumulation of autophagosomes under basal conditions and enhances autophagic flux. Represses cell death and promotes long-term clonogenic survival of cells grown in the absence of glucose in a macroautophagy-independent manner. May have some role in extracellular matrix engulfment or growth factor receptor recycling, both of which can modulate cell survival. This chain is Modulator of macroautophagy TMEM150B, found in Homo sapiens (Human).